A 399-amino-acid chain; its full sequence is Probable peptidoglycan glycosyltransferase FtsW (399 aa).

Topologically, residues 1 to 32 (MMAGFAQTTITKINQFYERWMPRLPAEMTARN) are cytoplasmic. Residues 33–53 (VLVFCVVCLLCIGSVMVASAS) traverse the membrane as a helical segment. The Periplasmic portion of the chain corresponds to 54-72 (MPYAEYMHENPFHYVVRHA). A helical membrane pass occupies residues 73–93 (ISIATAAIVAYLVYKVPLNVW). Over 94-97 (FKNT) the chain is Cytoplasmic. The helical transmembrane segment at 98–118 (FSFWLITILLLLAVLVIGTEV) threads the bilayer. The Periplasmic segment spans residues 119–126 (NGSRRWIR). The helical transmembrane segment at 127 to 147 (LAGFTLQPTEVAKVMMAIFTA) threads the bilayer. Topologically, residues 148–159 (DYVVRRAKEVRT) are cytoplasmic. The helical transmembrane segment at 160-180 (HWKGLVRLSGVMAITVGLIIA) threads the bilayer. Topologically, residues 181–183 (EPD) are periplasmic. Residues 184–204 (LGATVVIVLMMVGIFFLAGAP) traverse the membrane as a helical segment. The Cytoplasmic portion of the chain corresponds to 205 to 207 (PTQ). A helical transmembrane segment spans residues 208–228 (FAIMLGAVVMGIGFLILFEPY). Over 229–292 (RLARAMSFTN…DFMLAVLGEE (64 aa)) the chain is Periplasmic. The helical transmembrane segment at 293 to 313 (FGFVGISIVIGLSFIMLACCI) threads the bilayer. At 314–327 (KIGHRALKHNFLRA) the chain is on the cytoplasmic side. A helical membrane pass occupies residues 328-348 (GYLAYGISIIFLLQIIVNAGM). Topologically, residues 349–359 (NMGLMPTKGLT) are periplasmic. The helical transmembrane segment at 360-380 (LPFISYGGTSLMMCAAMISLI) threads the bilayer. Topologically, residues 381–399 (LRIDASTQEINPDREESNF) are cytoplasmic.

It belongs to the SEDS family. FtsW subfamily.

Its subcellular location is the cell inner membrane. It catalyses the reaction [GlcNAc-(1-&gt;4)-Mur2Ac(oyl-L-Ala-gamma-D-Glu-L-Lys-D-Ala-D-Ala)](n)-di-trans,octa-cis-undecaprenyl diphosphate + beta-D-GlcNAc-(1-&gt;4)-Mur2Ac(oyl-L-Ala-gamma-D-Glu-L-Lys-D-Ala-D-Ala)-di-trans,octa-cis-undecaprenyl diphosphate = [GlcNAc-(1-&gt;4)-Mur2Ac(oyl-L-Ala-gamma-D-Glu-L-Lys-D-Ala-D-Ala)](n+1)-di-trans,octa-cis-undecaprenyl diphosphate + di-trans,octa-cis-undecaprenyl diphosphate + H(+). It participates in cell wall biogenesis; peptidoglycan biosynthesis. Functionally, peptidoglycan polymerase that is essential for cell division. The protein is Probable peptidoglycan glycosyltransferase FtsW of Acinetobacter baylyi (strain ATCC 33305 / BD413 / ADP1).